Here is a 406-residue protein sequence, read N- to C-terminus: Peptidase T (406 aa).

H81 contacts Zn(2+). D83 is a catalytic residue. D142 contacts Zn(2+). E176 serves as the catalytic Proton acceptor. Positions 177, 199, and 381 each coordinate Zn(2+).

Belongs to the peptidase M20B family. Zn(2+) serves as cofactor.

It is found in the cytoplasm. It catalyses the reaction Release of the N-terminal residue from a tripeptide.. Its function is as follows. Cleaves the N-terminal amino acid of tripeptides. The chain is Peptidase T from Streptococcus pneumoniae serotype 2 (strain D39 / NCTC 7466).